Reading from the N-terminus, the 252-residue chain is uncharacterized protein (252 aa).

Residue 28 to 35 (GCDGTGKS) participates in ATP binding.

The protein to E.coli YghS and YghT.

This is an uncharacterized protein from Escherichia coli O6:H1 (strain CFT073 / ATCC 700928 / UPEC).